A 332-amino-acid polypeptide reads, in one-letter code: N-acetyl-gamma-glutamyl-phosphate reductase (332 aa).

Cysteine 144 is a catalytic residue.

Belongs to the NAGSA dehydrogenase family. Type 1 subfamily.

Its subcellular location is the cytoplasm. It carries out the reaction N-acetyl-L-glutamate 5-semialdehyde + phosphate + NADP(+) = N-acetyl-L-glutamyl 5-phosphate + NADPH + H(+). The protein operates within amino-acid biosynthesis; L-arginine biosynthesis; N(2)-acetyl-L-ornithine from L-glutamate: step 3/4. Functionally, catalyzes the NADPH-dependent reduction of N-acetyl-5-glutamyl phosphate to yield N-acetyl-L-glutamate 5-semialdehyde. The chain is N-acetyl-gamma-glutamyl-phosphate reductase from Archaeoglobus fulgidus (strain ATCC 49558 / DSM 4304 / JCM 9628 / NBRC 100126 / VC-16).